The sequence spans 255 residues: Glutamate racemase (255 aa).

Substrate is bound by residues 7-8 (DS) and 39-40 (YG). The active-site Proton donor/acceptor is the Cys-70. 71-72 (NT) serves as a coordination point for substrate. The Proton donor/acceptor role is filled by Cys-181. 182–183 (TH) is a binding site for substrate.

Belongs to the aspartate/glutamate racemases family.

The enzyme catalyses L-glutamate = D-glutamate. It functions in the pathway cell wall biogenesis; peptidoglycan biosynthesis. Its function is as follows. Provides the (R)-glutamate required for cell wall biosynthesis. The protein is Glutamate racemase of Helicobacter acinonychis (strain Sheeba).